Reading from the N-terminus, the 87-residue chain is Large ribosomal subunit protein bL27 (87 aa).

The disordered stretch occupies residues 1 to 21 (MAHKKGGGSTRNGRDSASKRL).

It belongs to the bacterial ribosomal protein bL27 family.

The protein is Large ribosomal subunit protein bL27 of Amoebophilus asiaticus (strain 5a2).